The primary structure comprises 78 residues: Large ribosomal subunit protein bL28 (78 aa).

This sequence belongs to the bacterial ribosomal protein bL28 family.

The chain is Large ribosomal subunit protein bL28 (rpmB) from Treponema pallidum (strain Nichols).